The chain runs to 371 residues: Deoxyuridine 5'-triphosphate nucleotidohydrolase (371 aa).

Residues 260-262 (RSS) and 366-367 (FG) contribute to the substrate site. Residues 350-371 (NEFDAEAPPSERGTGGFGSTGI) form a disordered region. Residues 362 to 371 (GTGGFGSTGI) show a composition bias toward gly residues.

It belongs to the dUTPase family. Mg(2+) serves as cofactor.

The enzyme catalyses dUTP + H2O = dUMP + diphosphate + H(+). Functionally, involved in nucleotide metabolism: produces dUMP, the immediate precursor of thymidine nucleotides and decreases the intracellular concentration of dUTP to avoid uracil incorporation into viral DNA. In Homo sapiens (Human), this protein is Deoxyuridine 5'-triphosphate nucleotidohydrolase.